The chain runs to 301 residues: Phosphatidylglycerol--prolipoprotein diacylglyceryl transferase (301 aa).

4 helical membrane-spanning segments follow: residues 10-30 (IAFS…LASF), 57-77 (LLFY…MLFY), 92-112 (VWEG…AVAW), and 119-139 (LQMF…LGFG). Arg-140 is an a 1,2-diacyl-sn-glycero-3-phospho-(1'-sn-glycerol) binding site. The next 3 helical transmembrane spans lie at 202-222 (PSQL…LWLF), 230-250 (YAVS…VEFV), and 264-284 (LTRG…LFWL).

The protein belongs to the Lgt family.

The protein resides in the cell inner membrane. The enzyme catalyses L-cysteinyl-[prolipoprotein] + a 1,2-diacyl-sn-glycero-3-phospho-(1'-sn-glycerol) = an S-1,2-diacyl-sn-glyceryl-L-cysteinyl-[prolipoprotein] + sn-glycerol 1-phosphate + H(+). It participates in protein modification; lipoprotein biosynthesis (diacylglyceryl transfer). Catalyzes the transfer of the diacylglyceryl group from phosphatidylglycerol to the sulfhydryl group of the N-terminal cysteine of a prolipoprotein, the first step in the formation of mature lipoproteins. This chain is Phosphatidylglycerol--prolipoprotein diacylglyceryl transferase, found in Xylella fastidiosa (strain 9a5c).